A 364-amino-acid chain; its full sequence is Chaperone protein DnaJ (364 aa).

The J domain occupies 4–69 (DYYEILGLSK…NKKAKYDRFG (66 aa)). The CR-type zinc-finger motif lies at 135–213 (GYKNNINITR…CKGKGRITNQ (79 aa)). Zn(2+) is bound by residues C148, C151, C165, C168, C187, C190, C201, and C204. CXXCXGXG motif repeat units lie at residues 148–155 (CHSCLGKK), 165–172 (CNMCNGSG), 187–194 (CSKCYGEG), and 201–208 (CKSCKGKG).

It belongs to the DnaJ family. As to quaternary structure, homodimer. Requires Zn(2+) as cofactor.

It localises to the cytoplasm. In terms of biological role, participates actively in the response to hyperosmotic and heat shock by preventing the aggregation of stress-denatured proteins and by disaggregating proteins, also in an autonomous, DnaK-independent fashion. Unfolded proteins bind initially to DnaJ; upon interaction with the DnaJ-bound protein, DnaK hydrolyzes its bound ATP, resulting in the formation of a stable complex. GrpE releases ADP from DnaK; ATP binding to DnaK triggers the release of the substrate protein, thus completing the reaction cycle. Several rounds of ATP-dependent interactions between DnaJ, DnaK and GrpE are required for fully efficient folding. Also involved, together with DnaK and GrpE, in the DNA replication of plasmids through activation of initiation proteins. The sequence is that of Chaperone protein DnaJ from Borrelia garinii subsp. bavariensis (strain ATCC BAA-2496 / DSM 23469 / PBi) (Borreliella bavariensis).